The sequence spans 275 residues: Ribosomal RNA small subunit methyltransferase A (275 aa).

Residues N15, L17, G42, E63, D88, and N111 each coordinate S-adenosyl-L-methionine.

This sequence belongs to the class I-like SAM-binding methyltransferase superfamily. rRNA adenine N(6)-methyltransferase family. RsmA subfamily.

The protein resides in the cytoplasm. It carries out the reaction adenosine(1518)/adenosine(1519) in 16S rRNA + 4 S-adenosyl-L-methionine = N(6)-dimethyladenosine(1518)/N(6)-dimethyladenosine(1519) in 16S rRNA + 4 S-adenosyl-L-homocysteine + 4 H(+). Its function is as follows. Specifically dimethylates two adjacent adenosines (A1518 and A1519) in the loop of a conserved hairpin near the 3'-end of 16S rRNA in the 30S particle. May play a critical role in biogenesis of 30S subunits. This chain is Ribosomal RNA small subunit methyltransferase A, found in Geobacter metallireducens (strain ATCC 53774 / DSM 7210 / GS-15).